We begin with the raw amino-acid sequence, 160 residues long: Conopressin/conophysin, isoform 2 (160 aa).

A signal peptide spans 1–30 (MKCSVLQMSRLSWAMCLMLLMLLLLGTAQG). C31 and C36 form a disulfide bridge. The residue at position 39 (G39) is a Glycine amide. Residues 40–47 (GKRAVDAL) constitute a propeptide that is removed on maturation. Disulfide bonds link C53/C97, C56/C70, C64/C87, C71/C77, C104/C118, C112/C130, and C119/C124.

The protein belongs to the vasopressin/oxytocin family. In terms of tissue distribution, expressed by the venom gland.

The protein localises to the secreted. Its function is as follows. Targets vasopressin-oxytocin related receptors. The protein is Conopressin/conophysin, isoform 2 of Conus monile (Necklace cone).